Here is a 94-residue protein sequence, read N- to C-terminus: Small ribosomal subunit protein eS24 (94 aa).

The protein belongs to the eukaryotic ribosomal protein eS24 family.

This chain is Small ribosomal subunit protein eS24, found in Nanoarchaeum equitans (strain Kin4-M).